Reading from the N-terminus, the 1046-residue chain is UDP-N-acetylglucosamine--peptide N-acetylglucosaminyltransferase 110 kDa subunit (1046 aa).

An N-acetylalanine modification is found at A2. 2 positions are modified to phosphoserine; by GSK3-beta; alternate: S3 and S4. O-linked (GlcNAc) serine; alternate glycans are attached at residues S3 and S4. S20 is modified (phosphoserine). 12 TPR repeats span residues 21–54, 89–122, 123–156, 157–190, 191–224, 225–258, 259–292, 293–326, 327–360, 361–394, 395–428, and 429–462; these read FQGL…EPDN, AEAY…KPDF, IDGY…NPDL, YCVR…QPNF, AVAW…DPNF, LDAY…SPNH, AVVH…QPHF, PDAY…CPTH, ADSL…FPEF, AAAH…SPTF, ADAY…NPAF, and ADAH…KPDF. O-linked (GlcNAc) serine; by autocatalysis glycosylation occurs at S399. The residue at position 454 (T454) is a Phosphothreonine. One copy of the TPR 13; truncated repeat lies at 463-473; it reads PDAYCNLAHCL. Positions 464–466 match the DFP motif motif; it reads DAY. Residues 487 to 503 carry the Nuclear localization signal motif; sequence KKLVSIVADQLEKNRLP. H508 acts as the Proton acceptor in catalysis. UDP contacts are provided by residues Q849, K852, 906–908, 911–914, 930–932, and D935; these read APK, HVRR, and HTT. Y989 is subject to Phosphotyrosine. The segment at 991-1010 is required for phosphatidylinositol 3,4,5-triphosphate binding; sequence KKIRGKVWKQRISSPLFNTK.

This sequence belongs to the glycosyltransferase 41 family. O-GlcNAc transferase subfamily. In terms of assembly, monomer; may exist in different oligomerization states in cells. Homotrimer, oligomerizes via TPR repeats 6 and 7. Trimerization is not necessary for activity in vitro, however it increases affinity for UDP-GlcNAc. Component of a THAP1/THAP3-HCFC1-OGT complex. Component of the NSL complex at least composed of MOF/KAT8, KANSL1, KANSL2, KANSL3, MCRS1, PHF20, OGT1/OGT, WDR5 and HCFC1. Found in a complex with KIF5B, RHOT1, RHOT2 and TRAK1. Found in a complex composed of at least SINHCAF, SIN3A, HDAC1, SAP30, RBBP4, OGT and TET1. Component of a complex composed of KMT2E/MLL5, OGT and USP7; the complex stabilizes KMT2E/MLL5, preventing KMT2E/MLL5 ubiquitination and proteasomal-mediated degradation. Interacts (via TPRs 1-6) with SIN3A; the interaction mediates transcriptional repression in parallel with histone deacetylase. Interacts (via TPR 5-6) with TET1, TET2 and TET3. Interacts (via TPR repeats 6 and 7) with ATXN10. Interacts with NSD2. Interacts with PROSER1; this interaction mediates TET2 O-GlcNAcylation and stability by promoting the interaction between OGT and TET2. Ubiquitinated by the SCF(FBXO31) complex, leading to its proteasomal degradation. Post-translationally, phosphorylation on Ser-3 or Ser-4 by GSK3-beta positively regulates its activity. Phosphorylation at Thr-454 by AMPK promotes nuclear localization. In terms of processing, glycosylated via autocatalysis; O-GlcNAcylation at Ser-399 promotes nuclear localization.

The protein resides in the nucleus. The protein localises to the cytoplasm. The enzyme catalyses L-seryl-[protein] + UDP-N-acetyl-alpha-D-glucosamine = 3-O-(N-acetyl-beta-D-glucosaminyl)-L-seryl-[protein] + UDP + H(+). It carries out the reaction L-threonyl-[protein] + UDP-N-acetyl-alpha-D-glucosamine = 3-O-(N-acetyl-beta-D-glucosaminyl)-L-threonyl-[protein] + UDP + H(+). It participates in protein modification; protein glycosylation. With respect to regulation, subject to product inhibition by UDP. Functionally, catalyzes the transfer of a single N-acetylglucosamine from UDP-GlcNAc to a serine or threonine residue in cytoplasmic and nuclear proteins resulting in their modification with a beta-linked N-acetylglucosamine (O-GlcNAc). Glycosylates a large and diverse number of proteins including histone H2B, AKT1, AMPK, ATG4B, CAPRIN1, EZH2, FNIP1, GSDMD, KRT7, LMNA, LMNB1, LMNB2, RPTOR, HOXA1, PFKL, KMT2E/MLL5, MAPT/TAU, TET2, RBL2, RET, NOD2 and HCFC1. Can regulate their cellular processes via cross-talk between glycosylation and phosphorylation or by affecting proteolytic processing. Involved in insulin resistance in muscle and adipocyte cells via glycosylating insulin signaling components and inhibiting the 'Thr-308' phosphorylation of AKT1, enhancing IRS1 phosphorylation and attenuating insulin signaling. Involved in glycolysis regulation by mediating glycosylation of 6-phosphofructokinase PFKL, inhibiting its activity. Plays a key role in chromatin structure by mediating O-GlcNAcylation of 'Ser-112' of histone H2B: recruited to CpG-rich transcription start sites of active genes via its interaction with TET proteins (TET1, TET2 or TET3). As part of the NSL complex indirectly involved in acetylation of nucleosomal histone H4 on several lysine residues. O-GlcNAcylation of 'Ser-75' of EZH2 increases its stability, and facilitating the formation of H3K27me3 by the PRC2/EED-EZH2 complex. Stabilizes KMT2E/MLL5 by mediating its glycosylation, thereby preventing KMT2E/MLL5 ubiquitination. Regulates circadian oscillation of the clock genes and glucose homeostasis in the liver. Stabilizes clock proteins BMAL1 and CLOCK through O-glycosylation, which prevents their ubiquitination and subsequent degradation. Promotes the CLOCK-BMAL1-mediated transcription of genes in the negative loop of the circadian clock such as PER1/2 and CRY1/2. O-glycosylates HCFC1 and regulates its proteolytic processing and transcriptional activity. Component of a THAP1/THAP3-HCFC1-OGT complex that is required for the regulation of the transcriptional activity of RRM1. Regulates mitochondrial motility in neurons by mediating glycosylation of TRAK1. Promotes autophagy by mediating O-glycosylation of ATG4B. Acts as a regulator of mTORC1 signaling by mediating O-glycosylation of RPTOR and FNIP1: O-GlcNAcylation of RPTOR in response to glucose sufficiency promotes activation of the mTORC1 complex. This Sus scrofa (Pig) protein is UDP-N-acetylglucosamine--peptide N-acetylglucosaminyltransferase 110 kDa subunit (OGT).